We begin with the raw amino-acid sequence, 362 residues long: F-box protein At2g14710 (362 aa).

An F-box domain is found at 1 to 47 (MAHLKNLPWELIEEILSRVPPKSLVRFRTVSKQWNALFDDKTFINNH).

This chain is F-box protein At2g14710, found in Arabidopsis thaliana (Mouse-ear cress).